The sequence spans 118 residues: Large ribosomal subunit protein uL22 (118 aa).

It belongs to the universal ribosomal protein uL22 family. As to quaternary structure, part of the 50S ribosomal subunit.

This protein binds specifically to 23S rRNA; its binding is stimulated by other ribosomal proteins, e.g. L4, L17, and L20. It is important during the early stages of 50S assembly. It makes multiple contacts with different domains of the 23S rRNA in the assembled 50S subunit and ribosome. Functionally, the globular domain of the protein is located near the polypeptide exit tunnel on the outside of the subunit, while an extended beta-hairpin is found that lines the wall of the exit tunnel in the center of the 70S ribosome. The protein is Large ribosomal subunit protein uL22 of Thermomicrobium roseum (strain ATCC 27502 / DSM 5159 / P-2).